Consider the following 361-residue polypeptide: Histidinol-phosphate aminotransferase (361 aa).

The disordered stretch occupies residues G26 to S45. An N6-(pyridoxal phosphate)lysine modification is found at K222.

It belongs to the class-II pyridoxal-phosphate-dependent aminotransferase family. Histidinol-phosphate aminotransferase subfamily. Requires pyridoxal 5'-phosphate as cofactor.

It carries out the reaction L-histidinol phosphate + 2-oxoglutarate = 3-(imidazol-4-yl)-2-oxopropyl phosphate + L-glutamate. The protein operates within amino-acid biosynthesis; L-histidine biosynthesis; L-histidine from 5-phospho-alpha-D-ribose 1-diphosphate: step 7/9. The chain is Histidinol-phosphate aminotransferase (hisC) from Haloferax volcanii (strain ATCC 29605 / DSM 3757 / JCM 8879 / NBRC 14742 / NCIMB 2012 / VKM B-1768 / DS2) (Halobacterium volcanii).